The sequence spans 449 residues: Glutamate--tRNA ligase 1 (449 aa).

A 'HIGH' region motif is present at residues 11-21; sequence PSPTGSLHVGN. Positions 242–246 match the 'KMSKS' region motif; that stretch reads PLSKR. Residue lysine 245 coordinates ATP.

It belongs to the class-I aminoacyl-tRNA synthetase family. Glutamate--tRNA ligase type 1 subfamily. Monomer.

The protein localises to the cytoplasm. It catalyses the reaction tRNA(Glu) + L-glutamate + ATP = L-glutamyl-tRNA(Glu) + AMP + diphosphate. Catalyzes the attachment of glutamate to tRNA(Glu) in a two-step reaction: glutamate is first activated by ATP to form Glu-AMP and then transferred to the acceptor end of tRNA(Glu). The sequence is that of Glutamate--tRNA ligase 1 from Parvibaculum lavamentivorans (strain DS-1 / DSM 13023 / NCIMB 13966).